A 214-amino-acid polypeptide reads, in one-letter code: Probable nicotinate-nucleotide adenylyltransferase (214 aa).

The protein belongs to the NadD family.

It carries out the reaction nicotinate beta-D-ribonucleotide + ATP + H(+) = deamido-NAD(+) + diphosphate. It functions in the pathway cofactor biosynthesis; NAD(+) biosynthesis; deamido-NAD(+) from nicotinate D-ribonucleotide: step 1/1. Catalyzes the reversible adenylation of nicotinate mononucleotide (NaMN) to nicotinic acid adenine dinucleotide (NaAD). The protein is Probable nicotinate-nucleotide adenylyltransferase of Buchnera aphidicola subsp. Acyrthosiphon pisum (strain 5A).